Reading from the N-terminus, the 217-residue chain is Probable ribonuclease P protein subunit 1 (217 aa).

This sequence belongs to the eukaryotic/archaeal RNase P protein component 1 family.

The protein localises to the nucleus. It localises to the nucleolus. The enzyme catalyses Endonucleolytic cleavage of RNA, removing 5'-extranucleotides from tRNA precursor.. Part of ribonuclease P, a protein complex that generates mature tRNA molecules by cleaving their 5'-ends. The chain is Probable ribonuclease P protein subunit 1 from Schizosaccharomyces pombe (strain 972 / ATCC 24843) (Fission yeast).